The chain runs to 208 residues: RDVNKPSVLLFIDNIFRFVQAGSEVSALLGRMPSAVGYQPTLGTEMGSLQERITSTKEGSITSIQAVYVPADDPTDPAPATTFAHLDATTVLPRGLAAKGIYPAVDPLDSTSTMLQPWIVGEEHHETAQGVKQTLQRYKELQDIIAILGLDESSEEDRLTVARARKIERFLSQPFFVAEVFTGSPGKYVSLPETIKGFQMILPGXLDN.

It belongs to the ATPase alpha/beta chains family. F-type ATPases have 2 components, CF(1) - the catalytic core - and CF(0) - the membrane proton channel. CF(1) has five subunits: alpha(3), beta(3), gamma(1), delta(1), epsilon(1). CF(0) has four main subunits: a(1), b(1), b'(1) and c(9-12).

Its subcellular location is the plastid. The protein localises to the chloroplast thylakoid membrane. It carries out the reaction ATP + H2O + 4 H(+)(in) = ADP + phosphate + 5 H(+)(out). Produces ATP from ADP in the presence of a proton gradient across the membrane. The catalytic sites are hosted primarily by the beta subunits. This is ATP synthase subunit beta, chloroplastic (atpB) from Lonchitis hirsuta (Tomato fern).